Here is a 226-residue protein sequence, read N- to C-terminus: RNA annealing protein YRA1 (226 aa).

Residues Met-1–Pro-62 form a disordered region. Ser-2 is modified (N-acetylserine). Phosphoserine is present on residues Ser-8 and Ser-100. Residues Val-78 to Asp-158 form the RRM domain. A disordered region spans residues Ala-173–Lys-226. Positions Ala-208–Lys-226 are enriched in basic and acidic residues.

Component of the transcription/export (TREX) complex, which is at least is formed of SUB2, TEX1 and YRA1 and the THO complex composed of HPR1, MFT1, THO2 and THP1. Interacts with RDS3 and YRA2.

Its subcellular location is the nucleus. In terms of biological role, RNA-binding RNA annealing protein. May have a role in pre-mRNA metabolism. Component the TREX complex, which operates in coupling transcription elongation to mRNA export. The polypeptide is RNA annealing protein YRA1 (YRA1) (Saccharomyces cerevisiae (strain ATCC 204508 / S288c) (Baker's yeast)).